Here is an 85-residue protein sequence, read N- to C-terminus: Sec-independent protein translocase protein TatA (85 aa).

A helical transmembrane segment spans residues Met1 to Gly21. The disordered stretch occupies residues Phe39 to His85.

It belongs to the TatA/E family. The Tat system comprises two distinct complexes: a TatABC complex, containing multiple copies of TatA, TatB and TatC subunits, and a separate TatA complex, containing only TatA subunits. Substrates initially bind to the TatABC complex, which probably triggers association of the separate TatA complex to form the active translocon.

The protein localises to the cell inner membrane. Functionally, part of the twin-arginine translocation (Tat) system that transports large folded proteins containing a characteristic twin-arginine motif in their signal peptide across membranes. TatA could form the protein-conducting channel of the Tat system. This chain is Sec-independent protein translocase protein TatA, found in Rhizorhabdus wittichii (strain DSM 6014 / CCUG 31198 / JCM 15750 / NBRC 105917 / EY 4224 / RW1) (Sphingomonas wittichii).